The sequence spans 870 residues: Dynamin-2 (870 aa).

The Dynamin-type G domain occupies 28-294 (HLDLPQIAVV…LTNHIRESLP (267 aa)). The segment at 38 to 45 (GGQSAGKS) is G1 motif. Ser41, Gly43, Lys44, Ser45, Ser46, Arg59, and Gly60 together coordinate GDP. The interval 64–66 (VTR) is G2 motif. Residues 136–139 (DLPG) form a G3 motif region. Residues 205 to 208 (TKLD) form a G4 motif region. Lys206, Asp208, and Asp211 together coordinate GDP. At Tyr231 the chain carries Phosphotyrosine; by SRC. A G5 motif region spans residues 235-238 (VNRS). GDP is bound by residues Asn236, Arg237, and Gln239. An N6-acetyllysine modification is found at Lys299. The PH domain occupies 519–625 (LVIRRGWLTI…WKASFLRAGV (107 aa)). Residue Tyr597 is modified to Phosphotyrosine; by SRC. N6-acetyllysine is present on Lys598. In terms of domain architecture, GED spans 653-744 (VETIRNLVDS…IIGDISTSTV (92 aa)). A disordered region spans residues 741–870 (TSTVSTPVPP…IRPAEPSLLD (130 aa)). Thr755 is modified (phosphothreonine). A compositionally biased stretch (polar residues) spans 756–767 (WLQSASSHSPTP). The residue at position 764 (Ser764) is a Phosphoserine; by CDK1. A compositionally biased stretch (low complexity) spans 796-806 (VPVGAAASFSA). A compositionally biased stretch (pro residues) spans 826–855 (PAPPQIPSRPVRIPPGIPPGVPSRRPPAAP). The residue at position 848 (Ser848) is a Phosphoserine; by GSK3-alpha.

This sequence belongs to the TRAFAC class dynamin-like GTPase superfamily. Dynamin/Fzo/YdjA family. In terms of assembly, oligomerizes into a helical polymer that self-assembles around the vesicle membrane, when associated to the menbrane through lipid binding. Interacts with SHANK1 and SHANK2. Interacts with SNX9. Interacts (via C-terminal proline-rich domain (PRD)) with SNX18 (via SH3 domain); this interaction regulates ATG9A and ATG16L1 trafficking from recycling endosomes to sites of autophagosome formation. Interacts with SNX33 (via SH3 domain). Interacts with MYO1E (via SH3 domain). Interacts with PSTPIP1 (via SH3 domain). Interacts with CTNND2. Interacts (via C-terminal proline-rich domain (PRD)) with BIN1 (via SH3 domain); this interaction allows the recruitment of DNM2 to the membrane tubules and inhibits self-assembly-stimulated GTPase activity on the membrane. Interacts with GABARAP, GABARAPL1 and GABARAPL2. Interacts with MAP1LC3B (the lipidate and non-lipidated LC3 form); this interaction mediates recycling endosome scission leading to autophagosome release. Interacts with ITSN1. Interacts (via C-terminal proline-rich domain (PRD)) with SH3BP4 (via SH3 domain); this interaction controls the GTPase activity and is prevented by EGFR-induced tyrosine phosphorylation of either DNM2 or SH3BP4. May interact with PIK3C3. May be a component of a complex composed of RAB5A (in GDP-bound form), DYN2 and PIK3C3. Interacts with SDC4; this interaction is markedly enhanced at focal ahesion site upon induction of focal adhesions and stress-fiber formation. Interacts with ACTN1. Interacts with CTTN; this interaction stimulates the intrinsic GTPase activity of DNM2 and stabilizes the association of DNM2 and actin filaments; in addition this interaction is stimulated by ligand binding to the receptor, leading to the recruitment of the DNM2-CTTN complex to the sequestered receptor-ligand complex to its internalization. Interacts with NOSTRIN (via SH3 domain); this interaction allows the recruitment of NOS3 to dynamin-positive structures. Interacts with TUBG1; this interaction may participate in centrosome cohesion. In terms of processing, phosphorylation at Ser-848 by GSK3-alpha relieves the inhibition of BIN1 and promotes endocytosis. Phosphorylation at Ser-764 by CDK1 is greatly increased upon mitotic entry. It regulates cytokinesis downstream of calcineurin, and does not affect clathrin-mediated endocytosis. Dephosphorylated by calcineurin/PP2 during cytokinesis in a Ca(2+)- and calmodulin-dependent manner. Phosphorylated on tyrosine residues by EGFR and after activation of SRC. As to expression, widely expressed. Expressed in skeletal muscle and the peripheral nerve.

The protein localises to the cytoplasm. Its subcellular location is the cytoskeleton. It is found in the cytoplasmic vesicle. It localises to the clathrin-coated vesicle. The protein resides in the cell projection. The protein localises to the uropodium. Its subcellular location is the endosome. It is found in the microtubule organizing center. It localises to the centrosome. The protein resides in the centriole. The protein localises to the recycling endosome. Its subcellular location is the phagocytic cup. It is found in the phagosome membrane. It localises to the podosome. The protein resides in the cell junction. The protein localises to the postsynaptic density. Its subcellular location is the synapse. It is found in the synaptosome. It localises to the midbody. The protein resides in the membrane. The protein localises to the clathrin-coated pit. The catalysed reaction is GTP + H2O = GDP + phosphate + H(+). Catalyzes the hydrolysis of GTP and utilizes this energy to mediate vesicle scission at plasma membrane during endocytosis and filament remodeling at many actin structures during organization of the actin cytoskeleton. Plays an important role in vesicular trafficking processes, namely clathrin-mediated endocytosis (CME), exocytic and clathrin-coated vesicle from the trans-Golgi network, and PDGF stimulated macropinocytosis. During vesicular trafficking process, associates to the membrane, through lipid binding, and self-assembles into ring-like structure through oligomerization to form a helical polymer around the vesicle membrane and leading to vesicle scission. Plays a role in organization of the actin cytoskeleton by mediating arrangement of stress fibers and actin bundles in podocytes. During organization of the actin cytoskeleton, self-assembles into ring-like structure that directly bundles actin filaments to form typical membrane tubules decorated with dynamin spiral polymers. Self-assembly increases GTPase activity and the GTP hydrolysis causes the rapid depolymerization of dynamin spiral polymers, and results in dispersion of actin bundles. Remodels, through its interaction with CTTN, bundled actin filaments in a GTPase-dependent manner and plays a role in orchestrating the global actomyosin cytoskeleton. The interaction with CTTN stabilizes the interaction of DNM2 and actin filaments and stimulates the intrinsic GTPase activity that results in actin filament-barbed ends and increases the sensitivity of filaments in bundles to the actin depolymerizing factor, CFL1. Plays a role in the autophagy process, by participating in the formation of ATG9A vesicles destined for the autophagosomes through its interaction with SNX18, by mediating recycling endosome scission leading to autophagosome release through MAP1LC3B interaction. Also regulates maturation of apoptotic cell corpse-containing phagosomes by recruiting PIK3C3 to the phagosome membrane. Also plays a role in cytokinesis. May participate in centrosome cohesion through its interaction with TUBG1. Plays a role in the regulation of neuron morphology, axon growth and formation of neuronal growth cones. Involved in membrane tubulation. The chain is Dynamin-2 from Homo sapiens (Human).